The sequence spans 151 residues: ATP synthase subunit b' (151 aa).

A helical membrane pass occupies residues 18-38 (TLPLMALQVVLLTFILNALFF).

Belongs to the ATPase B chain family. In terms of assembly, F-type ATPases have 2 components, F(1) - the catalytic core - and F(0) - the membrane proton channel. F(1) has five subunits: alpha(3), beta(3), gamma(1), delta(1), epsilon(1). F(0) has four main subunits: a(1), b(1), b'(1) and c(10-14). The alpha and beta chains form an alternating ring which encloses part of the gamma chain. F(1) is attached to F(0) by a central stalk formed by the gamma and epsilon chains, while a peripheral stalk is formed by the delta, b and b' chains.

The protein localises to the cellular thylakoid membrane. F(1)F(0) ATP synthase produces ATP from ADP in the presence of a proton or sodium gradient. F-type ATPases consist of two structural domains, F(1) containing the extramembraneous catalytic core and F(0) containing the membrane proton channel, linked together by a central stalk and a peripheral stalk. During catalysis, ATP synthesis in the catalytic domain of F(1) is coupled via a rotary mechanism of the central stalk subunits to proton translocation. In terms of biological role, component of the F(0) channel, it forms part of the peripheral stalk, linking F(1) to F(0). The b'-subunit is a diverged and duplicated form of b found in plants and photosynthetic bacteria. The chain is ATP synthase subunit b' from Prochlorococcus marinus (strain MIT 9313).